Consider the following 1027-residue polypeptide: Circadian locomoter output cycles protein kaput (1027 aa).

A bHLH domain is found at 15 to 65 (LCRKSRNLSEKKRRDQFNSLVNDLSALISTSSRKMDKSTVLKSTIAFLKNH). 2 consecutive PAS domains span residues 88–160 (NDEY…VIEP) and 255–321 (REMS…ELRQ). Disordered stretches follow at residues 377 to 402 (RKEGQKSGNSNSITNNGSSKVIASTG), 443 to 575 (TSPA…QQLQ), 765 to 800 (QQMMMQQQQNLHTQHQHNLQQQHQSHSQLQQHTQQQ), 869 to 911 (TINP…NNED), and 926 to 1027 (SINF…GSSQ). The span at 383 to 402 (SGNSNSITNNGSSKVIASTG) shows a compositional bias: low complexity. The segment covering 443-486 (TSPAVDSSPMWSASAVQPSGSCQINPLKTSRPASSYGNISSTGI) has biased composition (polar residues). 2 stretches are compositionally biased toward low complexity: residues 504-516 (SDSTSMSTDSVTS) and 552-575 (QQQQQHQNQQQQHQQHQQLQQQLQ). An implicated in the circadian rhythmicity region spans residues 780 to 1027 (QHNLQQQHQS…SPHTAPGSSQ (248 aa)). Composition is skewed to low complexity over residues 871–909 (NPFNSSSNNNNQSYNGGSNLNNGNQNNNNRSSNPPQNNN) and 951–995 (SGSN…NQNQ). Residues 1006 to 1027 (QMSQEQSQNLFNSPHTAPGSSQ) are compositionally biased toward polar residues.

As to quaternary structure, efficient DNA binding requires dimerization with another bHLH protein. Forms a heterodimer with Cycle. In terms of tissue distribution, widely expressed. Found in head, body, and appendage fractions.

It localises to the nucleus. Circadian regulator that acts as a transcription factor and generates a rhythmic output with a period of about 24 hours. Oscillates in antiphase to the cycling observed for period (PER) and timeless (TIM). According to PubMed:9742131, reaches peak abundance within several hours of the dark-light transition at ZT0 (zeitgeber 0), whereas PubMed:9616122 describes bimodal oscillating expression with maximum at ZT5 and ZT23. Clock-cycle heterodimers activate cycling transcription of PER and TIM by binding to the E-box (5'-CACGTG-3') present in their promoters. Once induced, Period and Timeless block Clock's ability to transactivate their promoters. The polypeptide is Circadian locomoter output cycles protein kaput (Clk) (Drosophila melanogaster (Fruit fly)).